A 221-amino-acid chain; its full sequence is Large ribosomal subunit protein uL4 (221 aa).

The segment at 44–102 (AARQGTHKVKRRGEVRGGGKKPYRQKGTGRARQGSTRAPQFAGGGVVHGPTPRDYSQRT) is disordered. Basic residues predominate over residues 61 to 72 (GGKKPYRQKGTG).

Belongs to the universal ribosomal protein uL4 family. Part of the 50S ribosomal subunit.

One of the primary rRNA binding proteins, this protein initially binds near the 5'-end of the 23S rRNA. It is important during the early stages of 50S assembly. It makes multiple contacts with different domains of the 23S rRNA in the assembled 50S subunit and ribosome. Functionally, forms part of the polypeptide exit tunnel. This chain is Large ribosomal subunit protein uL4, found in Streptomyces avermitilis (strain ATCC 31267 / DSM 46492 / JCM 5070 / NBRC 14893 / NCIMB 12804 / NRRL 8165 / MA-4680).